We begin with the raw amino-acid sequence, 115 residues long: NADH-ubiquinone oxidoreductase chain 3 (115 aa).

The next 3 membrane-spanning stretches (helical) occupy residues 4-24 (LLTM…AFWL), 55-75 (FFLV…LLPI), and 84-104 (INTM…GLAY).

The protein belongs to the complex I subunit 3 family. Core subunit of respiratory chain NADH dehydrogenase (Complex I) which is composed of 45 different subunits. Interacts with TMEM186. Interacts with TMEM242.

It is found in the mitochondrion inner membrane. It carries out the reaction a ubiquinone + NADH + 5 H(+)(in) = a ubiquinol + NAD(+) + 4 H(+)(out). Core subunit of the mitochondrial membrane respiratory chain NADH dehydrogenase (Complex I) which catalyzes electron transfer from NADH through the respiratory chain, using ubiquinone as an electron acceptor. Essential for the catalytic activity of complex I. The polypeptide is NADH-ubiquinone oxidoreductase chain 3 (Neotoma lepida (Desert woodrat)).